An 84-amino-acid chain; its full sequence is MVIIRLARGGSKKRPFYNIVATDSRNRRDGRFIERVGFYNPVATKGESLRIAQDRLTYWQGVGAQLSPTVERLVKEAAKAQPAA.

It belongs to the bacterial ribosomal protein bS16 family.

The chain is Small ribosomal subunit protein bS16 from Paraburkholderia phytofirmans (strain DSM 17436 / LMG 22146 / PsJN) (Burkholderia phytofirmans).